A 208-amino-acid chain; its full sequence is Probable GTP-binding protein EngB (208 aa).

In terms of domain architecture, EngB-type G spans 23 to 205 (LTSEMVVLGR…RQTLLKYLLT (183 aa)). GTP-binding positions include 31–38 (GRSNVGKS), 57–61 (GKTRL), 84–87 (DLPG), 154–157 (TKFD), and 182–184 (FNA). Residues serine 38 and threonine 59 each coordinate Mg(2+).

It belongs to the TRAFAC class TrmE-Era-EngA-EngB-Septin-like GTPase superfamily. EngB GTPase family. Mg(2+) is required as a cofactor.

Its function is as follows. Necessary for normal cell division and for the maintenance of normal septation. The chain is Probable GTP-binding protein EngB from Helicobacter acinonychis (strain Sheeba).